Consider the following 208-residue polypeptide: Protein-L-isoaspartate O-methyltransferase (208 aa).

The active site involves serine 59.

It belongs to the methyltransferase superfamily. L-isoaspartyl/D-aspartyl protein methyltransferase family.

It is found in the cytoplasm. It carries out the reaction [protein]-L-isoaspartate + S-adenosyl-L-methionine = [protein]-L-isoaspartate alpha-methyl ester + S-adenosyl-L-homocysteine. In terms of biological role, catalyzes the methyl esterification of L-isoaspartyl residues in peptides and proteins that result from spontaneous decomposition of normal L-aspartyl and L-asparaginyl residues. It plays a role in the repair and/or degradation of damaged proteins. The protein is Protein-L-isoaspartate O-methyltransferase of Proteus mirabilis (strain HI4320).